Here is a 136-residue protein sequence, read N- to C-terminus: Succinate dehydrogenase 2 membrane subunit SdhC (136 aa).

3 helical membrane-spanning segments follow: residues 32-52 (RISGATIFFFLFVHVLDAAML), 70-90 (IVGLMEYGLVAAVLFHALNGI), and 109-129 (LWIIGSVFLLLMVPAGVVVGI). Histidine 85 provides a ligand contact to heme.

This sequence belongs to the cytochrome b560 family. As to quaternary structure, part of an enzyme complex containing four subunits: a flavoprotein (SdhA), an iron-sulfur protein (SdhB), plus two membrane-anchoring proteins (SdhC and SdhD). Requires heme as cofactor.

It localises to the cell membrane. Functionally, membrane-anchoring subunit of succinate dehydrogenase 2 (Sdh2). Sdh2 may catalyze the two-electron oxidation of succinate to fumarate with a corresponding reduction of quinone to quinol under low oxygen conditions, when the primary aerobic succinate dehydrogenase (Sdh1) is inhibited. Sdh2 seems to be the generator of the proton motive force (PMF) under hypoxia. This is Succinate dehydrogenase 2 membrane subunit SdhC from Mycobacterium tuberculosis (strain ATCC 25618 / H37Rv).